A 265-amino-acid polypeptide reads, in one-letter code: Chanoclavine-I dehydrogenase easD (265 aa).

An N-terminal signal peptide occupies residues 1-20 (MSFVSSKIFAITGGASGIGA). NADP(+) is bound by residues Ile-18, Asp-66, Arg-132, Tyr-169, Lys-173, and Thr-205. Catalysis depends on Tyr-169, which acts as the Proton donor. Lys-173 acts as the Lowers pKa of active site Tyr in catalysis.

This sequence belongs to the short-chain dehydrogenases/reductases (SDR) family. Homotetramer.

The catalysed reaction is chanoclavine-I + NAD(+) = chanoclavine-I aldehyde + NADH + H(+). The protein operates within alkaloid biosynthesis; ergot alkaloid biosynthesis. Functionally, chanoclavine-I dehydrogenase; part of the gene cluster that mediates the biosynthesis of fungal ergot alkaloid. DmaW catalyzes the first step of ergot alkaloid biosynthesis by condensing dimethylallyl diphosphate (DMAP) and tryptophan to form 4-dimethylallyl-L-tryptophan. The second step is catalyzed by the methyltransferase easF that methylates 4-dimethylallyl-L-tryptophan in the presence of S-adenosyl-L-methionine, resulting in the formation of 4-dimethylallyl-L-abrine. The catalase easC and the FAD-dependent oxidoreductase easE then transform 4-dimethylallyl-L-abrine to chanoclavine-I which is further oxidized by easD in the presence of NAD(+), resulting in the formation of chanoclavine-I aldehyde. Chanoclavine-I aldehyde is the precursor of ergoamides and ergopeptines in Clavicipitaceae, and clavine-type alcaloids such as fumiclavine in Trichocomaceae. However, the metabolites downstream of chanoclavine-I aldehyde in Arthrodermataceae have not been identified yet. This chain is Chanoclavine-I dehydrogenase easD, found in Trichophyton verrucosum (strain HKI 0517).